A 490-amino-acid chain; its full sequence is Alginate production protein AlgE (490 aa).

The signal sequence occupies residues 1–32 (MNSSRSVNPRPSFAPRALSLAIALLLGAPAFA). Polar residues-rich tracts occupy residues 102 to 115 (DTLQ…NNSR) and 343 to 355 (QFQQ…NRSN). 2 disordered regions span residues 102-121 (DTLQ…GREP) and 331-355 (ARGS…NRSN).

The protein belongs to the AlgE family.

Its subcellular location is the cell outer membrane. It participates in glycan biosynthesis; alginate biosynthesis. Has non-porin-like, channel-forming properties and probably functions as an alginate permeability pore. The polypeptide is Alginate production protein AlgE (algE) (Pseudomonas aeruginosa (strain ATCC 15692 / DSM 22644 / CIP 104116 / JCM 14847 / LMG 12228 / 1C / PRS 101 / PAO1)).